The chain runs to 368 residues: MNNKIALYCRSGFEKECAAEITTKAAQLEIFGFARVKENSGYVLFECYQLEDADRLIREVPFRELIFARQMMVVGELLKDLPPEDRVSPIVGMLTGVVEKAGELRVEVADTNESKELLKFCRKLTVPLRNAMREQKILSARENPHRPVVHVFFIASGCCYVGYSYSNNNSPFYMGIPRLKFPSDAPSRSTLKLEEAFHVFIPADEWEERLASGMHAVDLGACPGGWTYQLVQRSMMVQAIDNGLMAQSLMDTGQVTHHRVDGFKYEPTRSNIYWLVCDMVEKPAKVTQLIIKWLVNGWCREAIFNLKLPMKKRFEVVSENLEMIDEQLKENGINAHIQAKQLYHDREEVTVHVRRIWSGVPGRRDERF.

S-adenosyl-L-methionine-binding positions include serine 189, 222–225, aspartate 241, aspartate 261, and aspartate 278; that span reads CPGG. The Proton acceptor role is filled by lysine 307.

It belongs to the class I-like SAM-binding methyltransferase superfamily. RNA methyltransferase RlmE family. RlmM subfamily. In terms of assembly, monomer.

The protein localises to the cytoplasm. It catalyses the reaction cytidine(2498) in 23S rRNA + S-adenosyl-L-methionine = 2'-O-methylcytidine(2498) in 23S rRNA + S-adenosyl-L-homocysteine + H(+). Catalyzes the 2'-O-methylation at nucleotide C2498 in 23S rRNA. The protein is Ribosomal RNA large subunit methyltransferase M of Yersinia enterocolitica serotype O:8 / biotype 1B (strain NCTC 13174 / 8081).